A 397-amino-acid chain; its full sequence is Natural killer cell receptor 2B4 (397 aa).

Positions 1–19 (MLGQAVLFTTFLLLRAHQG) are cleaved as a signal peptide. Residues 20 to 226 (QDCPDSSEEV…SVPSNFRFLP (207 aa)) lie on the Extracellular side of the membrane. Residues cysteine 22 and cysteine 119 are joined by a disulfide bond. 2 Ig-like domains span residues 22-129 (CPDS…LILD) and 131-215 (VETP…THGC). 7 N-linked (GlcNAc...) asparagine glycosylation sites follow: asparagine 78, asparagine 145, asparagine 161, asparagine 178, asparagine 197, asparagine 206, and asparagine 210. The cysteines at positions 154 and 196 are disulfide-linked. The helical transmembrane segment at 227–247 (FGVIIVILVTLFLGAIICFCV) threads the bilayer. Residues 248–397 (WTKKRKQLQF…RELENFDVYS (150 aa)) are Cytoplasmic-facing. The short motif at 264–269 (TIYEYV) is the ITSM 1 element. Tyrosine 266 carries the post-translational modification Phosphotyrosine. A compositionally biased stretch (polar residues) spans 277-290 (DQQGCSRASGSPSA). The tract at residues 277–300 (DQQGCSRASGSPSAVQEDGRGQRE) is disordered. Short sequence motifs (ITSM) lie at residues 323–328 (TMYSMI), 342–347 (TVYSVV), and 367–372 (TVYEEV). The residue at position 325 (tyrosine 325) is a Phosphotyrosine; by FYN. Phosphotyrosine is present on tyrosine 344. At tyrosine 369 the chain carries Phosphotyrosine; by FYN.

Interacts with CD48. Interacts (via phosphorylated ITSM 1-4) with SH2D1A/SAP (via SH2 domain); SH2D1A probably mediates association with FYN. Interacts (via phosphorylated ITSM 3) with PTPN11/SHP-2, INPP5D/SHIP1, PTPN6/SHP-1 and CSK; binding of SH2D1A prevents association with PTPN11, PTPN6 and CSK. Interacts weakly (via phosphorylated ITSM 2) with PTPN11 and CSK. Interacts with SH2D1B and SH2D1B2. Interacts with MHC class I proteins; the interaction is proposed to prevent self-killing of NK cells. Post-translationally, N-linked glycosylation is essential for the binding to its ligand CD48. Also O-glycosylated, in contrast, O-linked sialylation has a negative impact on ligand binding. Phosphorylated by FYN and CSK on tyrosine residues following activation. Coligation with inhibitory receptors such as KIR2DL1 inhibits phosphorylation upon contact of NK cells with sensitive target cells. In terms of tissue distribution, expressed in natural killer (NK) cells, T cells and dendritic cells.

The protein localises to the membrane. It localises to the cell membrane. It is found in the membrane raft. In terms of biological role, heterophilic receptor of the signaling lymphocytic activation molecule (SLAM) family; its ligand is CD48. SLAM receptors triggered by homo- or heterotypic cell-cell interactions are modulating the activation and differentiation of a wide variety of immune cells and thus are involved in the regulation and interconnection of both innate and adaptive immune response. Activities are controlled by presence or absence of small cytoplasmic adapter proteins, SH2D1A/SAP and/or SH2D1B/EAT-2. Acts as activating natural killer (NK) cell receptor. Activating function implicates association with SH2D1A and FYN. Downstreaming signaling involves predominantly VAV1, and, to a lesser degree, INPP5D/SHIP1 and CBL. Signal attenuation in the absence of SH2D1A is proposed to be dependent on INPP5D and to a lesser extent PTPN6/SHP-1 and PTPN11/SHP-2. Stimulates NK cell cytotoxicity, production of IFN-gamma and granule exocytosis. Optimal expansion and activation of NK cells seems to be dependent on the engagement of CD244 with CD48 expressed on neighboring NK cells. Regulation of NK cell activity by adapters Sh2d1b and Sh2d1b2 is reported conflictingly. Acts as costimulator in NK activation by enhancing signals by other NK receptors such as NCR3 and NCR1. At early stages of NK cell differentiation may function as an inhibitory receptor possibly ensuring the self-tolerance of developing NK cells. Involved in the regulation of CD8(+) T-cell proliferation; expression on activated T-cells and binding to CD48 provides costimulatory-like function for neighboring T-cells. Inhibits inflammatory responses in dendritic cells (DCs). The protein is Natural killer cell receptor 2B4 (Cd244) of Mus musculus (Mouse).